The chain runs to 248 residues: MNQTNFGLKKVDYTKKQGLVNNVFSNVADKYDLMNDLMSLGLHRLWKDEFIRQIPNLNSHILDVASGSGDIALKLAKKARDRVNNISLTLSDINEEMLKQAKKKAIDLNLFQNLKFTVASAEELPFPDDSFDYYTIAFGIRNVPDINKALKEACRVLKPMGKFICLEFSKVKEGYIKDFYKFYSFNIIPSIGQMIVGNKEAYEYLVESIELFPSQDEFRIMIKDAGFEEVGYKNLSGGIVAIHSAYTR.

Residues Ser68 and Asp92 each contribute to the S-adenosyl-L-methionine site.

This sequence belongs to the class I-like SAM-binding methyltransferase superfamily. MenG/UbiE family.

It carries out the reaction a 2-demethylmenaquinol + S-adenosyl-L-methionine = a menaquinol + S-adenosyl-L-homocysteine + H(+). The catalysed reaction is a 2-methoxy-6-(all-trans-polyprenyl)benzene-1,4-diol + S-adenosyl-L-methionine = a 5-methoxy-2-methyl-3-(all-trans-polyprenyl)benzene-1,4-diol + S-adenosyl-L-homocysteine + H(+). The protein operates within quinol/quinone metabolism; menaquinone biosynthesis; menaquinol from 1,4-dihydroxy-2-naphthoate: step 2/2. It functions in the pathway cofactor biosynthesis; ubiquinone biosynthesis. Methyltransferase required for the conversion of demethylmenaquinol (DMKH2) to menaquinol (MKH2) and the conversion of 2-polyprenyl-6-methoxy-1,4-benzoquinol (DDMQH2) to 2-polyprenyl-3-methyl-6-methoxy-1,4-benzoquinol (DMQH2). This is Ubiquinone/menaquinone biosynthesis C-methyltransferase UbiE from Rickettsia massiliae (strain Mtu5).